We begin with the raw amino-acid sequence, 317 residues long: L-lactate dehydrogenase 1 (317 aa).

Residues V17, D38, K43, Y69, and 83–84 each bind NAD(+); that span reads GA. Residues Q86 and R92 each contribute to the substrate site. Residues S105, 122–124, and S147 contribute to the NAD(+) site; that span reads ATN. 124–127 serves as a coordination point for substrate; that stretch reads NPVD. 152–155 contacts substrate; sequence DSAR. The Proton acceptor role is filled by H179. At Y223 the chain carries Phosphotyrosine. T232 is a substrate binding site.

It belongs to the LDH/MDH superfamily. LDH family. As to quaternary structure, homotetramer.

Its subcellular location is the cytoplasm. The catalysed reaction is (S)-lactate + NAD(+) = pyruvate + NADH + H(+). It participates in fermentation; pyruvate fermentation to lactate; (S)-lactate from pyruvate: step 1/1. In terms of biological role, catalyzes the conversion of lactate to pyruvate (Potential). Appears to be the primary factor that allows S.aureus growth during nitrosative stress in both aerobically and anaerobically cultured cells. The polypeptide is L-lactate dehydrogenase 1 (Staphylococcus aureus (strain JH1)).